The following is a 308-amino-acid chain: Transaldolase (308 aa).

Catalysis depends on lysine 125, which acts as the Schiff-base intermediate with substrate.

The protein belongs to the transaldolase family. Type 1 subfamily. As to quaternary structure, homodimer.

It localises to the cytoplasm. The enzyme catalyses D-sedoheptulose 7-phosphate + D-glyceraldehyde 3-phosphate = D-erythrose 4-phosphate + beta-D-fructose 6-phosphate. It functions in the pathway carbohydrate degradation; pentose phosphate pathway; D-glyceraldehyde 3-phosphate and beta-D-fructose 6-phosphate from D-ribose 5-phosphate and D-xylulose 5-phosphate (non-oxidative stage): step 2/3. Transaldolase is important for the balance of metabolites in the pentose-phosphate pathway. This chain is Transaldolase, found in Pseudomonas savastanoi pv. phaseolicola (strain 1448A / Race 6) (Pseudomonas syringae pv. phaseolicola (strain 1448A / Race 6)).